Reading from the N-terminus, the 428-residue chain is GTPase Obg (428 aa).

The region spanning 1–158 is the Obg domain; the sequence is MFVDQVKIYV…RDVILELKVL (158 aa). The 171-residue stretch at 159–329 folds into the OBG-type G domain; it reads ADVGLVGFPS…LLFEVANLIE (171 aa). Residues 165 to 172, 190 to 194, 212 to 215, 282 to 285, and 310 to 312 each bind GTP; these read GFPSVGKS, FTTIV, DLPG, NKMD, and SAV. S172 and T192 together coordinate Mg(2+). Positions 350–428 constitute an OCT domain; sequence KFDTEGVKFE…ILEYEFEFID (79 aa).

This sequence belongs to the TRAFAC class OBG-HflX-like GTPase superfamily. OBG GTPase family. Monomer. Mg(2+) is required as a cofactor.

Its subcellular location is the cytoplasm. Its function is as follows. An essential GTPase which binds GTP, GDP and possibly (p)ppGpp with moderate affinity, with high nucleotide exchange rates and a fairly low GTP hydrolysis rate. Plays a role in control of the cell cycle, stress response, ribosome biogenesis and in those bacteria that undergo differentiation, in morphogenesis control. The sequence is that of GTPase Obg from Bacillus cereus (strain B4264).